The chain runs to 188 residues: 3-deoxy-D-manno-octulosonate 8-phosphate phosphatase KdsC (188 aa).

Residues aspartate 32 and aspartate 34 each coordinate Mg(2+). Substrate is bound by residues aspartate 34, 55 to 59 (NVRDG), arginine 63, arginine 78, arginine 86, and lysine 102. Residue aspartate 125 coordinates Mg(2+).

In terms of assembly, homotetramer. The cofactor is Mg(2+). Co(2+) is required as a cofactor.

It carries out the reaction 3-deoxy-alpha-D-manno-2-octulosonate-8-phosphate + H2O = 3-deoxy-alpha-D-manno-oct-2-ulosonate + phosphate. Its pathway is carbohydrate biosynthesis; 3-deoxy-D-manno-octulosonate biosynthesis; 3-deoxy-D-manno-octulosonate from D-ribulose 5-phosphate: step 3/3. It functions in the pathway bacterial outer membrane biogenesis; lipopolysaccharide biosynthesis. Its activity is regulated as follows. Inhibited by calcium, cadmium, mercury, and copper ions. Catalyzes the hydrolysis of 3-deoxy-D-manno-octulosonate 8-phosphate (KDO 8-P) to 3-deoxy-D-manno-octulosonate (KDO) and inorganic phosphate. In Escherichia coli (strain B / BL21-DE3), this protein is 3-deoxy-D-manno-octulosonate 8-phosphate phosphatase KdsC.